The sequence spans 72 residues: Exodeoxyribonuclease 7 small subunit (72 aa).

The protein belongs to the XseB family. As to quaternary structure, heterooligomer composed of large and small subunits.

It is found in the cytoplasm. The enzyme catalyses Exonucleolytic cleavage in either 5'- to 3'- or 3'- to 5'-direction to yield nucleoside 5'-phosphates.. Its function is as follows. Bidirectionally degrades single-stranded DNA into large acid-insoluble oligonucleotides, which are then degraded further into small acid-soluble oligonucleotides. The sequence is that of Exodeoxyribonuclease 7 small subunit from Chlamydia muridarum (strain MoPn / Nigg).